A 120-amino-acid chain; its full sequence is NADH-ubiquinone oxidoreductase chain 3 (120 aa).

Helical transmembrane passes span 6 to 26 (LLFF…LTWV), 63 to 83 (IVCV…PFFF), and 85 to 105 (FFLV…FVFY).

It belongs to the complex I subunit 3 family.

It localises to the mitochondrion membrane. The enzyme catalyses a ubiquinone + NADH + 5 H(+)(in) = a ubiquinol + NAD(+) + 4 H(+)(out). In terms of biological role, core subunit of the mitochondrial membrane respiratory chain NADH dehydrogenase (Complex I) that is believed to belong to the minimal assembly required for catalysis. Complex I functions in the transfer of electrons from NADH to the respiratory chain. The immediate electron acceptor for the enzyme is believed to be ubiquinone. This Paramecium tetraurelia protein is NADH-ubiquinone oxidoreductase chain 3 (ND3).